The sequence spans 181 residues: Protein Syd (181 aa).

The protein belongs to the Syd family.

It is found in the cell inner membrane. Functionally, interacts with the SecY protein in vivo. May bind preferentially to an uncomplexed state of SecY, thus functioning either as a chelating agent for excess SecY in the cell or as a regulatory factor that negatively controls the translocase function. The protein is Protein Syd of Alteromonas mediterranea (strain DSM 17117 / CIP 110805 / LMG 28347 / Deep ecotype).